Here is a 252-residue protein sequence, read N- to C-terminus: 3-dehydroquinate dehydratase (252 aa).

3-dehydroquinate-binding positions include serine 21, 46-48, and arginine 82; that span reads EWR. The active-site Proton donor/acceptor is histidine 143. The active-site Schiff-base intermediate with substrate is the lysine 170. The 3-dehydroquinate site is built by arginine 213, serine 232, and glutamine 236.

The protein belongs to the type-I 3-dehydroquinase family. In terms of assembly, homodimer.

The catalysed reaction is 3-dehydroquinate = 3-dehydroshikimate + H2O. It functions in the pathway metabolic intermediate biosynthesis; chorismate biosynthesis; chorismate from D-erythrose 4-phosphate and phosphoenolpyruvate: step 3/7. Its activity is regulated as follows. Inhibited by (2R)-2-methyl-3-dehydroquinic acid. In terms of biological role, involved in the third step of the chorismate pathway, which leads to the biosynthesis of aromatic amino acids. Catalyzes the cis-dehydration of 3-dehydroquinate (DHQ) and introduces the first double bond of the aromatic ring to yield 3-dehydroshikimate. The reaction involves the formation of an imine intermediate between the keto group of 3-dehydroquinate and the epsilon-amino group of a Lys-170 at the active site. This is 3-dehydroquinate dehydratase from Salmonella typhimurium (strain LT2 / SGSC1412 / ATCC 700720).